The chain runs to 982 residues: E3 ubiquitin-protein ligase CBL-B (982 aa).

Positions 35–167 (PPKQAAADRR…KAIFPNGQFQ (133 aa)) are 4H. Residues 35–343 (PPKQAAADRR…GRSYNPDLTG (309 aa)) enclose the Cbl-PTB domain. The EF-hand-like stretch occupies residues 168 to 240 (GDNFRITKAD…FEFDIFTRLF (73 aa)). Asp221, Thr223, Asn225, Tyr227, and Glu232 together coordinate Ca(2+). The interval 241 to 343 (QPWGSILRNW…GRSYNPDLTG (103 aa)) is SH2-like. Ser282 is subject to Phosphoserine; by PKC/PRKCQ. Arg286 is a binding site for 4-O-phospho-L-tyrosine. The tract at residues 344–372 (LCEPTPHDHIKVTQEQYELYCEMGSTFQL) is linker. The residue at position 363 (Tyr363) is a Phosphotyrosine. The RING-type zinc-finger motif lies at 373-412 (CKICAENDKDVKIEPCGHLMCTSCLTAWQESDGQGCPFCR). A disordered region spans residues 465-588 (ASVRKCTDRQ…SVPSRDQPMP (124 aa)). Over residues 473–486 (RQNSPVTSPGSSPL) the composition is skewed to polar residues. A phosphoserine mark is found at Ser476, Ser480, Ser484, Ser521, Ser525, and Ser529. An interaction with VAV1 region spans residues 543–567 (PLPAPPPPLRDPPPPPERPPPIPPD). Over residues 544 to 566 (LPAPPPPLRDPPPPPERPPPIPP) the composition is skewed to pro residues. Ser633 carries the phosphoserine modification. Residues Tyr664 and Tyr708 each carry the phosphotyrosine modification. 2 disordered regions span residues 702–723 (EDDDDEYKIPSSHPVSLNSQPS) and 745–929 (THGA…EAAL). The segment covering 714-723 (HPVSLNSQPS) has biased composition (polar residues). Over residues 819-828 (PSLPPPPPPA) the composition is skewed to pro residues. The segment covering 838 to 848 (PPGSSSRPSSG) has biased composition (low complexity). Residues 884–899 (RASQDYDQLPSSSDGS) show a composition bias toward polar residues. The residue at position 889 (Tyr889) is a Phosphotyrosine. The interaction with SH3KBP1 stretch occupies residues 891–927 (QLPSSSDGSQAPARPPKPRPRRTAPEIHHRKPHGPEA). Basic residues predominate over residues 906-922 (PKPRPRRTAPEIHHRKP). The region spanning 931 to 970 (NVDAKIAKLMGEGYAFEEVKRALEIAQNNVEVARSILREF) is the UBA domain.

In terms of assembly, interacts with SH3 domain-containing proteins LCK, CRK and SORBS1. Interacts with LCP2 and ZAP70. Interacts with CBL. Interacts with SH3 domain-containing proteins VAV1, FYN, FGR, PLCG1, GRB2, CRKL, PIK3R1 and SH3KBP1/CIN85. Identified in heterotrimeric complexes with SH3KBP1/CIN85, CD2AP and ARHGEF7, where one CBLB peptide binds two copies of the other protein. Interacts with poly-ubiquitinated proteins. Dimerization is required for the binding of poly-ubiquitin, but not for the binding of mono-ubiquitin. Interacts with EGFR (phosphorylated). Interacts with IFT20. In terms of processing, phosphorylated on tyrosine and serine residues upon TCR or BCR activation. Phosphorylated on Tyr-664 and Tyr-708 in adipocytes following insulin stimulation. Post-translationally, auto-ubiquitinated upon EGF-mediated cell activation or upon T-cell costimulation by CD28; which promotes proteasomal degradation.

It is found in the cytoplasm. It carries out the reaction S-ubiquitinyl-[E2 ubiquitin-conjugating enzyme]-L-cysteine + [acceptor protein]-L-lysine = [E2 ubiquitin-conjugating enzyme]-L-cysteine + N(6)-ubiquitinyl-[acceptor protein]-L-lysine.. Its pathway is protein modification; protein ubiquitination. Functionally, E3 ubiquitin-protein ligase which accepts ubiquitin from specific E2 ubiquitin-conjugating enzymes, and transfers it to substrates, generally promoting their degradation by the proteasome. Negatively regulates TCR (T-cell receptor), BCR (B-cell receptor) and FCER1 (high affinity immunoglobulin epsilon receptor) signal transduction pathways. In naive T-cells, inhibits VAV1 activation upon TCR engagement and imposes a requirement for CD28 costimulation for proliferation and IL-2 production. Also acts by promoting PIK3R1/p85 ubiquitination, which impairs its recruitment to the TCR and subsequent activation. In activated T-cells, inhibits PLCG1 activation and calcium mobilization upon restimulation and promotes anergy. In B-cells, acts by ubiquitinating SYK and promoting its proteasomal degradation. Slightly promotes SRC ubiquitination. May be involved in EGFR ubiquitination and internalization. May be functionally coupled with the E2 ubiquitin-protein ligase UB2D3. In association with CBL, required for proper feedback inhibition of ciliary platelet-derived growth factor receptor-alpha (PDGFRA) signaling pathway via ubiquitination and internalization of PDGFRA. The chain is E3 ubiquitin-protein ligase CBL-B (Cblb) from Mus musculus (Mouse).